We begin with the raw amino-acid sequence, 120 residues long: NAD(P)H-quinone oxidoreductase subunit 3, chloroplastic (120 aa).

A run of 3 helical transmembrane segments spans residues 9–29, 64–84, and 88–108; these read IFWA…LISG, MFAL…PWAM, and VLGV…ILGL.

It belongs to the complex I subunit 3 family. As to quaternary structure, NDH is composed of at least 16 different subunits, 5 of which are encoded in the nucleus.

Its subcellular location is the plastid. It localises to the chloroplast thylakoid membrane. It carries out the reaction a plastoquinone + NADH + (n+1) H(+)(in) = a plastoquinol + NAD(+) + n H(+)(out). The catalysed reaction is a plastoquinone + NADPH + (n+1) H(+)(in) = a plastoquinol + NADP(+) + n H(+)(out). NDH shuttles electrons from NAD(P)H:plastoquinone, via FMN and iron-sulfur (Fe-S) centers, to quinones in the photosynthetic chain and possibly in a chloroplast respiratory chain. The immediate electron acceptor for the enzyme in this species is believed to be plastoquinone. Couples the redox reaction to proton translocation, and thus conserves the redox energy in a proton gradient. This is NAD(P)H-quinone oxidoreductase subunit 3, chloroplastic from Aethionema grandiflorum (Persian stone-cress).